We begin with the raw amino-acid sequence, 173 residues long: Large ribosomal subunit protein uL18 (173 aa).

The protein belongs to the universal ribosomal protein uL18 family. Part of the 50S ribosomal subunit. Contacts the 5S and 23S rRNAs.

In terms of biological role, this is one of the proteins that bind and probably mediate the attachment of the 5S RNA into the large ribosomal subunit, where it forms part of the central protuberance. This chain is Large ribosomal subunit protein uL18, found in Methanococcoides burtonii (strain DSM 6242 / NBRC 107633 / OCM 468 / ACE-M).